We begin with the raw amino-acid sequence, 492 residues long: N-succinylglutamate 5-semialdehyde dehydrogenase (492 aa).

220-225 (GSANTG) lines the NAD(+) pocket. Catalysis depends on residues Glu-243 and Cys-277.

Belongs to the aldehyde dehydrogenase family. AstD subfamily.

It carries out the reaction N-succinyl-L-glutamate 5-semialdehyde + NAD(+) + H2O = N-succinyl-L-glutamate + NADH + 2 H(+). It functions in the pathway amino-acid degradation; L-arginine degradation via AST pathway; L-glutamate and succinate from L-arginine: step 4/5. Catalyzes the NAD-dependent reduction of succinylglutamate semialdehyde into succinylglutamate. The sequence is that of N-succinylglutamate 5-semialdehyde dehydrogenase from Shigella flexneri.